Reading from the N-terminus, the 493-residue chain is 3-octaprenyl-4-hydroxybenzoate carboxy-lyase (493 aa).

Mn(2+) is bound at residue N172. Prenylated FMN contacts are provided by residues 175 to 177 (IYR), 189 to 191 (RWL), and 194 to 195 (RG). E238 contacts Mn(2+). D287 acts as the Proton donor in catalysis.

Belongs to the UbiD family. In terms of assembly, homohexamer. The cofactor is prenylated FMN. Mn(2+) is required as a cofactor.

The protein resides in the cell membrane. It catalyses the reaction a 4-hydroxy-3-(all-trans-polyprenyl)benzoate + H(+) = a 2-(all-trans-polyprenyl)phenol + CO2. It functions in the pathway cofactor biosynthesis; ubiquinone biosynthesis. Functionally, catalyzes the decarboxylation of 3-octaprenyl-4-hydroxy benzoate to 2-octaprenylphenol, an intermediate step in ubiquinone biosynthesis. The protein is 3-octaprenyl-4-hydroxybenzoate carboxy-lyase of Shewanella loihica (strain ATCC BAA-1088 / PV-4).